A 509-amino-acid chain; its full sequence is CDK5RAP3 protein homolog (509 aa).

It belongs to the CDK5RAP3 family.

The protein localises to the nucleus. Its subcellular location is the cytoplasm. Its function is as follows. Substrate adapter of E3 ligase complexes mediating ufmylation, the covalent attachment of the ubiquitin-like modifier UFM1 to substrate proteins, and which is involved in various processes, such as ribosome recycling and reticulophagy (also called ER-phagy). This Drosophila melanogaster (Fruit fly) protein is CDK5RAP3 protein homolog.